Consider the following 377-residue polypeptide: Beta-lactamase (377 aa).

The signal sequence occupies residues 1–19 (MFKTTLCALLITASCSTFA). Catalysis depends on S80, which acts as the Acyl-ester intermediate. A beta-lactam-binding residues include S80, Q136, Y166, N168, A334, and N359.

The protein belongs to the class-C beta-lactamase family. In terms of assembly, monomer.

Its subcellular location is the periplasm. The catalysed reaction is a beta-lactam + H2O = a substituted beta-amino acid. Inhibited by the beta-lactamase-blocking agents avibactam, enmetazobactam, relebactam, nacubactam, vaborbactam, taniborbactam, zidebactam, and beta-lactam-analog boronic acids, via a covalent binding to Ser-80. Inhibited by non-beta-lactam, benzo(b)thiophene-2-boronic acid (BZBTH2B) and various cyclic boronates. Not inhibited by clavulanic acid. Inhibited by O-aryloxycarbonyl hydroxamates, via cross-linking of the active site Ser-80 to Lys-331. Weakly inhibited by citric acid. Class C beta-lactamase which confers resistance to penicillins and cephalosporins. Has benzylpenicillin- and cephaloridine-hydrolyzing activity. Has weak cefuroxime, cefotaxime, cefoxitin and oxacillin-hydrolyzing activities. The protein is Beta-lactamase of Escherichia coli (strain K12).